We begin with the raw amino-acid sequence, 450 residues long: tRNA-aminoacylation cofactor arc1 (450 aa).

The tract at residues Gln208–Val278 is disordered. Composition is skewed to basic and acidic residues over residues Ile213 to Pro225 and Ser233 to Glu247. Over residues Lys248–Lys261 the composition is skewed to basic residues. Positions Asp262–Pro272 are enriched in basic and acidic residues. Positions Val278–Thr382 constitute a tRNA-binding domain.

The protein belongs to the tRNA-aminoacylation cofactor ARC1 family. In terms of assembly, component of a yeast aminoacyl-tRNA synthase (aaRS) complex formed by methionyl-tRNA synthase, glutamyl-tRNA synthase and the tRNA aminoacylation cofactor arc1 in a stoichiometric complex. Interacts with rar1/mes1 and gus1.

The protein localises to the cytoplasm. Binds to tRNA and functions as a cofactor for the methionyl-tRNA synthetase (MetRS) and glutamyl-tRNA synthetase (GluRS). Forms a complex with MetRS and GluRS and increases their affinity for cognate tRNAs due to the presence of a tRNA binding domain in its middle and C-terminal part. This chain is tRNA-aminoacylation cofactor arc1, found in Schizosaccharomyces pombe (strain 972 / ATCC 24843) (Fission yeast).